The primary structure comprises 309 residues: Malate dehydrogenase (309 aa).

Residues 10–15 and D34 contribute to the NAD(+) site; that span reads GAGNVG. R83 and R89 together coordinate substrate. NAD(+) is bound by residues N96 and 119 to 121; that span reads VTN. The substrate site is built by N121 and R152. Residue H176 is the Proton acceptor of the active site.

This sequence belongs to the LDH/MDH superfamily. MDH type 3 family.

The enzyme catalyses (S)-malate + NAD(+) = oxaloacetate + NADH + H(+). Catalyzes the reversible oxidation of malate to oxaloacetate. The polypeptide is Malate dehydrogenase (Desulforudis audaxviator (strain MP104C)).